A 148-amino-acid chain; its full sequence is Probable histone H2B.2 (148 aa).

Residues 1-32 show a composition bias toward basic and acidic residues; the sequence is MAPKGEKKPAEKKPAEEKKSTVAEKAPAEKKP. The interval 1 to 57 is disordered; the sequence is MAPKGEKKPAEKKPAEEKKSTVAEKAPAEKKPKAGKKLPKEGGSAAGEKKKKRSKKS. Lys-7, Lys-36, and Lys-37 each carry N6-acetyllysine. A Glycyl lysine isopeptide (Lys-Gly) (interchain with G-Cter in ubiquitin) cross-link involves residue Lys-144.

The protein belongs to the histone H2B family. The nucleosome is a histone octamer containing two molecules each of H2A, H2B, H3 and H4 assembled in one H3-H4 heterotetramer and two H2A-H2B heterodimers. The octamer wraps approximately 147 bp of DNA. In terms of processing, can be acetylated to form H2BK6ac, H2BK33ac and H2BK34ac. Monoubiquitinated to form H2BK143ub1; may give a specific tag for epigenetic transcriptional activation.

It is found in the nucleus. Its subcellular location is the chromosome. In terms of biological role, core component of nucleosome. Nucleosomes wrap and compact DNA into chromatin, limiting DNA accessibility to the cellular machineries which require DNA as a template. Histones thereby play a central role in transcription regulation, DNA repair, DNA replication and chromosomal stability. DNA accessibility is regulated via a complex set of post-translational modifications of histones, also called histone code, and nucleosome remodeling. This chain is Probable histone H2B.2, found in Medicago truncatula (Barrel medic).